A 557-amino-acid chain; its full sequence is Glucose-6-phosphate isomerase (557 aa).

Glu-359 acts as the Proton donor in catalysis. Active-site residues include His-390 and Lys-518.

Belongs to the GPI family.

Its subcellular location is the cytoplasm. It catalyses the reaction alpha-D-glucose 6-phosphate = beta-D-fructose 6-phosphate. It participates in carbohydrate biosynthesis; gluconeogenesis. The protein operates within carbohydrate degradation; glycolysis; D-glyceraldehyde 3-phosphate and glycerone phosphate from D-glucose: step 2/4. Its function is as follows. Catalyzes the reversible isomerization of glucose-6-phosphate to fructose-6-phosphate. The polypeptide is Glucose-6-phosphate isomerase (Hahella chejuensis (strain KCTC 2396)).